Reading from the N-terminus, the 106-residue chain is DNA-directed RNA polymerase subunit omega (106 aa).

A disordered region spans residues 76-106 (REPAREAAEPAGEAPEEQQRAAGEREDQGAA). A compositionally biased stretch (basic and acidic residues) spans 92–106 (EQQRAAGEREDQGAA).

It belongs to the RNA polymerase subunit omega family. In terms of assembly, the RNAP catalytic core consists of 2 alpha, 1 beta, 1 beta' and 1 omega subunit. When a sigma factor is associated with the core the holoenzyme is formed, which can initiate transcription.

It catalyses the reaction RNA(n) + a ribonucleoside 5'-triphosphate = RNA(n+1) + diphosphate. Its function is as follows. Promotes RNA polymerase assembly. Latches the N- and C-terminal regions of the beta' subunit thereby facilitating its interaction with the beta and alpha subunits. In Rubrobacter xylanophilus (strain DSM 9941 / JCM 11954 / NBRC 16129 / PRD-1), this protein is DNA-directed RNA polymerase subunit omega.